The primary structure comprises 525 residues: Glutamate--cysteine ligase (525 aa).

Belongs to the glutamate--cysteine ligase type 1 family. Type 1 subfamily.

It carries out the reaction L-cysteine + L-glutamate + ATP = gamma-L-glutamyl-L-cysteine + ADP + phosphate + H(+). The protein operates within sulfur metabolism; glutathione biosynthesis; glutathione from L-cysteine and L-glutamate: step 1/2. This chain is Glutamate--cysteine ligase, found in Hahella chejuensis (strain KCTC 2396).